Here is a 466-residue protein sequence, read N- to C-terminus: 3-isopropylmalate dehydratase large subunit (466 aa).

[4Fe-4S] cluster contacts are provided by cysteine 347, cysteine 407, and cysteine 410.

Belongs to the aconitase/IPM isomerase family. LeuC type 1 subfamily. As to quaternary structure, heterodimer of LeuC and LeuD. The cofactor is [4Fe-4S] cluster.

It carries out the reaction (2R,3S)-3-isopropylmalate = (2S)-2-isopropylmalate. It functions in the pathway amino-acid biosynthesis; L-leucine biosynthesis; L-leucine from 3-methyl-2-oxobutanoate: step 2/4. Catalyzes the isomerization between 2-isopropylmalate and 3-isopropylmalate, via the formation of 2-isopropylmaleate. The protein is 3-isopropylmalate dehydratase large subunit of Shigella flexneri serotype 5b (strain 8401).